The chain runs to 182 residues: Peptide deformylase (182 aa).

Residues Cys110 and His153 each contribute to the Fe cation site. Glu154 is a catalytic residue. Residue His157 participates in Fe cation binding.

This sequence belongs to the polypeptide deformylase family. The cofactor is Fe(2+).

The catalysed reaction is N-terminal N-formyl-L-methionyl-[peptide] + H2O = N-terminal L-methionyl-[peptide] + formate. Functionally, removes the formyl group from the N-terminal Met of newly synthesized proteins. Requires at least a dipeptide for an efficient rate of reaction. N-terminal L-methionine is a prerequisite for activity but the enzyme has broad specificity at other positions. This is Peptide deformylase from Halalkalibacterium halodurans (strain ATCC BAA-125 / DSM 18197 / FERM 7344 / JCM 9153 / C-125) (Bacillus halodurans).